A 781-amino-acid polypeptide reads, in one-letter code: Dual specificity protein kinase zakA (781 aa).

Protein kinase domains lie at 9-317 (WEEI…HKLI) and 379-654 (DKDD…EIGL). Residues 15-23 (IGEGQYGRV) and lysine 44 contribute to the ATP site. Aspartate 132 functions as the Proton acceptor in the catalytic mechanism. The segment at 168-209 (ETTNNNNNPNNNNNNNNNNNNNNNNNNNNNNNNNNINNINNN) is disordered. The span at 171-209 (NNNNNPNNNNNNNNNNNNNNNNNNNNNNNNNNINNINNN) shows a compositional bias: low complexity. ATP-binding positions include 385-393 (GGAGNFGDV) and lysine 406. Aspartate 507 serves as the catalytic Proton acceptor.

This sequence in the N-terminal section; belongs to the protein kinase superfamily. Ser/Thr protein kinase family. The protein in the C-terminal section; belongs to the protein kinase superfamily. TKL Tyr protein kinase family. N-terminal serine/threonine domain is capable of autophosphorylation, in vitro, but to a lower extent than the tyrosine kinase domain. May function as a negative regulator of the tyrosine kinase domain. Post-translationally, C-terminal tyrosine kinase domain is capable of autophosphorylation, in vitro. As to expression, zakA and zak2 are coexpressed in prestalk cell population, zakA is enriched in pstB populations and zak1 in pstA populations. ZakA and zak2 are coexpressed in prespore cells, zakA expression levels are 10 fold higher than zak2.

The catalysed reaction is L-seryl-[protein] + ATP = O-phospho-L-seryl-[protein] + ADP + H(+). It carries out the reaction L-threonyl-[protein] + ATP = O-phospho-L-threonyl-[protein] + ADP + H(+). It catalyses the reaction L-tyrosyl-[protein] + ATP = O-phospho-L-tyrosyl-[protein] + ADP + H(+). Positive regulator of gsk3/gskA activity required for cell pattern formation and a downstream effector of carC. The kinases, gsk3/gskA, zakA and zak2, form part of a signaling pathway that responds to extracellular cyclic AMP. The pathway has a role in transcriptional regulation; required to direct prespore/spore fates during development. ZakA negatively regulates prestalk differentiation by regulating expression of ecmB. Phosphorylates Y-214 of gsk3/gskA, in vitro. The polypeptide is Dual specificity protein kinase zakA (zakA) (Dictyostelium discoideum (Social amoeba)).